The sequence spans 629 residues: FAST kinase domain-containing protein 4 (629 aa).

In terms of domain architecture, RAP spans 559–617 (IAFLRWEFPNFNSRSKDLLGRFVLARRHVLAAGFLVVDVPYYEWLDLKSEWQKTAYLKD).

Belongs to the FAST kinase family.

Its subcellular location is the mitochondrion matrix. Plays a role in processing of mitochondrial RNA precursors and in stabilization of a subset of mature mitochondrial RNA species, such as MT-CO1, MT-CO2, MT-CYB, MT-CO3, MT-ND3, MT-ND5 and MT-ATP8/6. May play a role in cell cycle progression. The polypeptide is FAST kinase domain-containing protein 4 (Tbrg4) (Rattus norvegicus (Rat)).